The primary structure comprises 488 residues: Germacrene A hydroxylase (488 aa).

At 1 to 6 the chain is on the cytoplasmic side; the sequence is MELSFT. The chain crosses the membrane as a helical; Signal-anchor for type II membrane protein span at residues 7–23; sequence TSIAVATIVFVLFKLAT. The Lumenal segment spans residues 24–488; the sequence is RPKSNKKLLP…KTHLVLVPSF (465 aa). N-linked (GlcNAc...) asparagine glycosylation is found at Asn255, Asn260, and Asn379. Residue Cys432 coordinates heme.

The protein belongs to the cytochrome P450 family. The cofactor is heme.

It localises to the endoplasmic reticulum membrane. The enzyme catalyses (+)-(R)-germacrene A + 3 reduced [NADPH--hemoprotein reductase] + 3 O2 = germacra-1(10),4,11(13)-trien-12-oate + 3 oxidized [NADPH--hemoprotein reductase] + 4 H2O + 4 H(+). It functions in the pathway secondary metabolite biosynthesis; terpenoid biosynthesis. Functionally, involved in the biosynthesis of germacrene-derived sesquiterpene lactones. Catalyzes three consecutive oxidations of germacrene A to produce germacrene A acid. Could also catalyze the three-step oxidation of non-natural substrate amorphadiene to artemisinic acid. The protein is Germacrene A hydroxylase of Saussurea costus (Costus).